The sequence spans 137 residues: Small ribosomal subunit protein uS12 (137 aa).

The segment at 1 to 57 (MPTINQLVRKPRKSKVEKSKSPALNVGYNSLKRVPTNESAPQKRGVATRVGTMTPKK) is disordered. 3-methylthioaspartic acid is present on D102.

The protein belongs to the universal ribosomal protein uS12 family. As to quaternary structure, part of the 30S ribosomal subunit. Contacts proteins S8 and S17. May interact with IF1 in the 30S initiation complex.

Functionally, with S4 and S5 plays an important role in translational accuracy. In terms of biological role, interacts with and stabilizes bases of the 16S rRNA that are involved in tRNA selection in the A site and with the mRNA backbone. Located at the interface of the 30S and 50S subunits, it traverses the body of the 30S subunit contacting proteins on the other side and probably holding the rRNA structure together. The combined cluster of proteins S8, S12 and S17 appears to hold together the shoulder and platform of the 30S subunit. This chain is Small ribosomal subunit protein uS12, found in Streptococcus gordonii (strain Challis / ATCC 35105 / BCRC 15272 / CH1 / DL1 / V288).